The following is a 216-amino-acid chain: DNA-directed RNA polymerase subunit alpha (216 aa).

This sequence belongs to the RNA polymerase alpha chain family. In plastids the minimal PEP RNA polymerase catalytic core is composed of four subunits: alpha, beta, beta', and beta''. When a (nuclear-encoded) sigma factor is associated with the core the holoenzyme is formed, which can initiate transcription.

The protein localises to the plastid. Its subcellular location is the chloroplast. The enzyme catalyses RNA(n) + a ribonucleoside 5'-triphosphate = RNA(n+1) + diphosphate. DNA-dependent RNA polymerase catalyzes the transcription of DNA into RNA using the four ribonucleoside triphosphates as substrates. The sequence is that of DNA-directed RNA polymerase subunit alpha (rpoA) from Euglena granulata.